The sequence spans 670 residues: DNA ligase (670 aa).

NAD(+) is bound by residues 32–36, 81–82, and E113; these read DAEYD and SL. K115 acts as the N6-AMP-lysine intermediate in catalysis. The NAD(+) site is built by R136, E173, K290, and K314. Zn(2+)-binding residues include C408, C411, C426, and C432. The BRCT domain maps to 592 to 670; that stretch reads EIDSPFAGKT…EAEMIRLLGE (79 aa).

This sequence belongs to the NAD-dependent DNA ligase family. LigA subfamily. The cofactor is Mg(2+). Mn(2+) serves as cofactor.

It carries out the reaction NAD(+) + (deoxyribonucleotide)n-3'-hydroxyl + 5'-phospho-(deoxyribonucleotide)m = (deoxyribonucleotide)n+m + AMP + beta-nicotinamide D-nucleotide.. DNA ligase that catalyzes the formation of phosphodiester linkages between 5'-phosphoryl and 3'-hydroxyl groups in double-stranded DNA using NAD as a coenzyme and as the energy source for the reaction. It is essential for DNA replication and repair of damaged DNA. In Yersinia pseudotuberculosis serotype IB (strain PB1/+), this protein is DNA ligase.